The sequence spans 247 residues: Germin-like protein 9-1 (247 aa).

The signal sequence occupies residues 1 to 25; the sequence is MMMSSRSSVSLGVLLLLAVILSAGA. The Cupin type-1 domain maps to 53 to 201; the sequence is KNLVTGNSGD…SMHTDQATVD (149 aa). Mn(2+)-binding residues include His-100, His-102, and Glu-107. Asn-126 carries N-linked (GlcNAc...) asparagine glycosylation. His-148 is a binding site for Mn(2+). A glycan (N-linked (GlcNAc...) asparagine) is linked at Asn-153.

The protein belongs to the germin family. In terms of assembly, oligomer (believed to be a pentamer but probably hexamer).

The protein resides in the secreted. Its subcellular location is the extracellular space. It localises to the apoplast. Its function is as follows. May play a role in plant defense. Probably has no oxalate oxidase activity even if the active site is conserved. The sequence is that of Germin-like protein 9-1 from Oryza sativa subsp. japonica (Rice).